The following is a 537-amino-acid chain: Phosphoenolpyruvate carboxykinase (ATP) (537 aa).

Positions 61, 194, and 200 each coordinate substrate. ATP is bound by residues Lys-200, His-219, and 235 to 243; that span reads GLSGTGKTT. The Mn(2+) site is built by Lys-200 and His-219. A Mn(2+)-binding site is contributed by Asp-256. The ATP site is built by Glu-284, Arg-322, and Thr-448. Arg-322 serves as a coordination point for substrate.

The protein belongs to the phosphoenolpyruvate carboxykinase (ATP) family. Requires Mn(2+) as cofactor.

It is found in the cytoplasm. The enzyme catalyses oxaloacetate + ATP = phosphoenolpyruvate + ADP + CO2. Its pathway is carbohydrate biosynthesis; gluconeogenesis. Functionally, involved in the gluconeogenesis. Catalyzes the conversion of oxaloacetate (OAA) to phosphoenolpyruvate (PEP) through direct phosphoryl transfer between the nucleoside triphosphate and OAA. The polypeptide is Phosphoenolpyruvate carboxykinase (ATP) (Bradyrhizobium sp. (strain BTAi1 / ATCC BAA-1182)).